Consider the following 280-residue polypeptide: Fructose-1,6-bisphosphatase class 1 (280 aa).

4 residues coordinate Mg(2+): glutamate 64, aspartate 83, leucine 85, and aspartate 86. Residues 86–89 (DGSS), tyrosine 189, and lysine 220 contribute to the substrate site. Glutamate 226 provides a ligand contact to Mg(2+).

This sequence belongs to the FBPase class 1 family. As to quaternary structure, homotetramer. Mg(2+) is required as a cofactor.

It is found in the cytoplasm. It carries out the reaction beta-D-fructose 1,6-bisphosphate + H2O = beta-D-fructose 6-phosphate + phosphate. It participates in carbohydrate biosynthesis; gluconeogenesis. The sequence is that of Fructose-1,6-bisphosphatase class 1 from Campylobacter jejuni subsp. jejuni serotype O:6 (strain 81116 / NCTC 11828).